A 148-amino-acid chain; its full sequence is Ponticulin-like protein D (148 aa).

A signal peptide spans 1 to 20 (MLLNKSLLLLVAFVFAIVSA). A glycan (N-linked (GlcNAc...) asparagine) is linked at Asn67. Asp125 carries GPI-like-anchor amidated aspartate lipidation. Residues 126–148 (SSAAATMIASFSAILIALLFALL) constitute a propeptide, removed in mature form.

This sequence belongs to the ponticulin family. The GPI-like-anchor contains a phosphoceramide group, rather than a phosphatidyl group.

Its subcellular location is the cell membrane. The sequence is that of Ponticulin-like protein D (ponD) from Dictyostelium discoideum (Social amoeba).